The following is a 265-amino-acid chain: Energy-coupling factor transporter transmembrane protein EcfT (265 aa).

A run of 6 helical transmembrane segments spans residues 26-46 (MVFV…QTYA), 47-67 (VGII…MFLF), 72-92 (PILF…KGGA), 107-127 (VIMG…TTIM), 152-172 (LPVH…PTLM), and 243-263 (HTYD…ILYL).

Belongs to the energy-coupling factor EcfT family. As to quaternary structure, forms a stable energy-coupling factor (ECF) transporter complex composed of 2 membrane-embedded substrate-binding proteins (S component), 2 ATP-binding proteins (A component) and 2 transmembrane proteins (T component). May be able to interact with more than 1 S component at a time.

The protein resides in the cell membrane. Functionally, transmembrane (T) component of an energy-coupling factor (ECF) ABC-transporter complex. Unlike classic ABC transporters this ECF transporter provides the energy necessary to transport a number of different substrates. The sequence is that of Energy-coupling factor transporter transmembrane protein EcfT from Macrococcus caseolyticus (strain JCSC5402) (Macrococcoides caseolyticum).